A 411-amino-acid chain; its full sequence is MKQRKGVLIILDGLGDRPIKELGGKTPLEYANTPTMDYLAKIGILGQQDPIKPGQPAGSDTAHLSIFGYDPYKSYRGRGYFEALGVGLELDEDDLAFRVNFATLENGVITDRRAGRISTEEAHELAKAIQENVDIPVDFIFKGATGHRAVLVLKGMAEGYKVGENDPHEAGKPPHPFTWEDEASKKVAEILEEFVKKAHEVLDKHPINEKRRKEGKPVANYLLIRGAGTYPNIPMKFTEQWKVKAAAVVAVALVKGVAKAIGFDVYTPKGATGEYNTDEMAKARKAVELLKDYDFVFIHFKPTDAAGHDNNPKLKAELIERADRMIKYIVDHVDLEDVVIAITGDHSTPCEVMNHSGDPVPLLIAGGGVRADYTEKFGEREAMRGGLGRIRGHDIVPIMMDLMNRTEKFGA.

The protein belongs to the BPG-independent phosphoglycerate mutase family. A-PGAM subfamily. Homotetramer. The cofactor is Mg(2+).

It carries out the reaction (2R)-2-phosphoglycerate = (2R)-3-phosphoglycerate. The protein operates within carbohydrate degradation; glycolysis; pyruvate from D-glyceraldehyde 3-phosphate: step 3/5. Its activity is regulated as follows. Inhibited to approximately 20% by EDTA. Its function is as follows. Catalyzes the interconversion of 2-phosphoglycerate and 3-phosphoglycerate. The polypeptide is 2,3-bisphosphoglycerate-independent phosphoglycerate mutase (apgM) (Pyrococcus furiosus (strain ATCC 43587 / DSM 3638 / JCM 8422 / Vc1)).